The sequence spans 194 residues: Ribosome maturation factor RimM (194 aa).

The 82-residue stretch at 113 to 194 (DGEYYWIDLI…RIVADWGLDY (82 aa)) folds into the PRC barrel domain.

Belongs to the RimM family. Binds ribosomal protein uS19.

Its subcellular location is the cytoplasm. Functionally, an accessory protein needed during the final step in the assembly of 30S ribosomal subunit, possibly for assembly of the head region. Essential for efficient processing of 16S rRNA. May be needed both before and after RbfA during the maturation of 16S rRNA. It has affinity for free ribosomal 30S subunits but not for 70S ribosomes. The chain is Ribosome maturation factor RimM from Leptothrix cholodnii (strain ATCC 51168 / LMG 8142 / SP-6) (Leptothrix discophora (strain SP-6)).